The sequence spans 294 residues: MTEDIRLVIITGMSGAGKTVAMQSFEDLGYFCIDNMPPSLLPKFWDLVRESGKLSKIALVIDLRSRAFYDEIVRMLNDVAVHGTMNAQVLFLDASDAELVSRYKETRRSHPLARNGRVLEGISRERELLAPIRQAAQLVIDTTKLSPRKLREEIFHNYETETTQAFHIELMSFGFKYGLPIDADIVMDVRFLPNPYYLPELRNQTGMDQPVYDYVMNQPQTEEFYQRFLGLLTTIVPGYKQEGKSSLTIAIGCTGGQHRSVALTQRLGQALGNTYPVHVTHRDIEKRKESANRS.

ATP is bound at residue 12–19 (GMSGAGKT). 62–65 (DLRS) serves as a coordination point for GTP.

This sequence belongs to the RapZ-like family.

Displays ATPase and GTPase activities. This chain is Nucleotide-binding protein LVIS_0651, found in Levilactobacillus brevis (strain ATCC 367 / BCRC 12310 / CIP 105137 / JCM 1170 / LMG 11437 / NCIMB 947 / NCTC 947) (Lactobacillus brevis).